The chain runs to 223 residues: Small ribosomal subunit protein uS3 (223 aa).

The 70-residue stretch at 39-108 (IRNFVKKNSY…NILINIVEVK (70 aa)) folds into the KH type-2 domain.

It belongs to the universal ribosomal protein uS3 family. As to quaternary structure, part of the 30S ribosomal subunit. Forms a tight complex with proteins S10 and S14.

Functionally, binds the lower part of the 30S subunit head. Binds mRNA in the 70S ribosome, positioning it for translation. The protein is Small ribosomal subunit protein uS3 of Clostridium botulinum (strain Hall / ATCC 3502 / NCTC 13319 / Type A).